Here is a 317-residue protein sequence, read N- to C-terminus: ADIPOR-like receptor IZH2 (317 aa).

Residues 1 to 78 (MSTLLERTKS…TFKSLFYLHN (78 aa)) are Cytoplasmic-facing. The helical transmembrane segment at 79 to 99 (ESVNIYSHLIPALGFFTVLLL) threads the bilayer. Residues 100–110 (DKSTIKVFATT) lie on the Extracellular side of the membrane. Residues 111-131 (TWLDHMVIDLFYSGAFACLIL) form a helical membrane-spanning segment. At 132-153 (SSSFHCLKSHSLRIATLGNKLD) the chain is on the cytoplasmic side. The helical transmembrane segment at 154–174 (YLGICILIVTSMVSILYYGYF) threads the bilayer. Residues 175–176 (EK) are Extracellular-facing. The helical transmembrane segment at 177–197 (FSLFCLFALITVSFGIACSIV) threads the bilayer. The Cytoplasmic portion of the chain corresponds to 198–212 (SLKDKFRKREWRPYR). A helical membrane pass occupies residues 213–233 (AGLFVCFGLSSIIPIFSGLYC). The Extracellular segment spans residues 234-242 (YSFSEIWTQ). Residues 243–263 (IQLFWVLLGGVLYIIGAVLYG) traverse the membrane as a helical segment. Topologically, residues 264 to 276 (MRFPEKICPGKFD) are cytoplasmic. The helical transmembrane segment at 277-297 (IWGHSHQLFHFLVVIAALCHL) threads the bilayer. At 298 to 317 (RGLLNSYELVHIKMENGIVS) the chain is on the extracellular side.

This sequence belongs to the ADIPOR family.

The protein localises to the membrane. Probable receptor, which is involved in metabolic pathways that regulate lipid metabolism such as fatty acid oxidation. This chain is ADIPOR-like receptor IZH2 (IZH2), found in Saccharomyces cerevisiae (strain ATCC 204508 / S288c) (Baker's yeast).